A 496-amino-acid polypeptide reads, in one-letter code: Glutamyl-tRNA(Gln) amidotransferase subunit A (496 aa).

Active-site charge relay system residues include Lys75 and Ser150. Residue Ser174 is the Acyl-ester intermediate of the active site.

It belongs to the amidase family. GatA subfamily. Heterotrimer of A, B and C subunits.

It carries out the reaction L-glutamyl-tRNA(Gln) + L-glutamine + ATP + H2O = L-glutaminyl-tRNA(Gln) + L-glutamate + ADP + phosphate + H(+). Functionally, allows the formation of correctly charged Gln-tRNA(Gln) through the transamidation of misacylated Glu-tRNA(Gln) in organisms which lack glutaminyl-tRNA synthetase. The reaction takes place in the presence of glutamine and ATP through an activated gamma-phospho-Glu-tRNA(Gln). The protein is Glutamyl-tRNA(Gln) amidotransferase subunit A of Burkholderia thailandensis (strain ATCC 700388 / DSM 13276 / CCUG 48851 / CIP 106301 / E264).